Consider the following 718-residue polypeptide: MLKCAWQNGPRQSNRWLWQLSNQIWKRSYSSKIRNIGILAHIDAGKTTTTERMLFYAGKTRALGEVHRGNTVTDYLTQERERGITICSSAVTFPWNDHRINLLDTPGHIDFTMEVEQSLYAVDGVVVVLDGTAGVEAQTVTVWSQADKHKLPRLIFVNKMDRPDADFVKCVSDLKDKLETQPVCLQYPVKNEDGQLAINDVIHLERLSWQQKDLGRSYKNVKLEPSDDLRQLQEKRNELIDQLSGLDDELADVVISTESFDKVDNALIERALRRATTQQKVVPVLLGSAYKNVGIQRLMDAVNSYLPAPEERNQIYDCFGTEVAGKVFKIVHDKQRGPLTLVRILRGEIKRGMRLISARGQAEVVSKLYEPLADEYREVSAVQSGDVVICAGLKSTVTGDLLTSSEEDDEFDESHELFAIDPQIPDAVYFCSIEPPSVSSQTAMEQALKQLQREDPSLRVSYDSVTGQTVLGGMGELHMDIIKSRILSEYKIDVDLGPLQIAYKEAIESPALTTLSVEKEIAGSKQSVSITLEVVKNQAELFSLDKSPENLPNLNTLRPRILQVLRKGSISALERGPRVGGQVVETQIRLHNATIGRGTADSFVMATASQCVQKLLSTSGTRLLEPIMALQIVAPSERISGIMADLSRRRALINDVLPKGERNKMILVNAPLAELSGYSSALRTISSGTASMTMQPCGFSSMNSVDESLAERRAQGLE.

The N-terminal 29 residues, 1–29 (MLKCAWQNGPRQSNRWLWQLSNQIWKRSY), are a transit peptide targeting the mitochondrion. The 280-residue stretch at 31 to 310 (SKIRNIGILA…AVNSYLPAPE (280 aa)) folds into the tr-type G domain. GTP contacts are provided by residues 40–47 (AHIDAGKT), 104–108 (DTPGH), and 158–161 (NKMD).

Belongs to the TRAFAC class translation factor GTPase superfamily. Classic translation factor GTPase family. EF-G/EF-2 subfamily.

The protein localises to the mitochondrion. In terms of biological role, mitochondrial GTPase that mediates the disassembly of ribosomes from messenger RNA at the termination of mitochondrial protein biosynthesis. Not involved in the GTP-dependent ribosomal translocation step during translation elongation. In Drosophila erecta (Fruit fly), this protein is Ribosome-releasing factor 2, mitochondrial.